A 252-amino-acid polypeptide reads, in one-letter code: Neurotrophic factor BDNF precursor form (252 aa).

The signal sequence occupies residues Met1–Ala18. Residues Ala19 to Arg133 constitute a propeptide that is removed on maturation. A disordered region spans residues Leu43–Ser62. Asn126 carries N-linked (GlcNAc...) asparagine glycosylation. 3 cysteine pairs are disulfide-bonded: Cys146/Cys213, Cys191/Cys242, and Cys201/Cys244.

It belongs to the NGF-beta family. As to quaternary structure, monomers and homodimers. Binds to NTRK2/TRKB. Can form heterodimers with other neurotrophin family members, such as NTF3 and NTF4 (in vitro), but the physiological relevance of this is not clear. BDNF precursor form: interacts with the heterodimer formed by NGFR and SORCS2. Mature BDNF has much lower affinity for the heterodimer formed by NGFR and SORCS2. In terms of processing, N-glycosylated and glycosulfated, contrary to mature BDNF. Post-translationally, mature BDNF is produced by proteolytic removal of the propeptide, catalyzed by a FURIN family member. In addition, the precursor form is proteolytically cleaved within the propeptide, but this is not an obligatory intermediate for the production of mature BDNF. Can be converted into mature BDNF by plasmin (PLG). Brain and central nervous system.

The protein resides in the secreted. Important signaling molecule that activates signaling cascades downstream of NTRK2. During development, promotes the survival and differentiation of selected neuronal populations of the peripheral and central nervous systems. Participates in axonal growth, pathfinding and in the modulation of dendritic growth and morphology. Major regulator of synaptic transmission and plasticity at adult synapses in many regions of the CNS. The versatility of BDNF is emphasized by its contribution to a range of adaptive neuronal responses including long-term potentiation (LTP), long-term depression (LTD), certain forms of short-term synaptic plasticity, as well as homeostatic regulation of intrinsic neuronal excitability. Functionally, important signaling molecule that activates signaling cascades downstream of NTRK2. Activates signaling cascades via the heterodimeric receptor formed by NGFR and SORCS2. Signaling via NGFR and SORCS2 plays a role in synaptic plasticity and long-term depression (LTD). Binding to NGFR and SORCS2 promotes neuronal apoptosis. Promotes neuronal growth cone collapse. In Sus scrofa (Pig), this protein is Neurotrophic factor BDNF precursor form (BDNF).